The sequence spans 661 residues: MNPDLRKERASATFNPELITHILDGSPENTRRRREIENLILNDPDFQHEDYNFLTRSQRYEVAVKKSATMVKKMREYGISDPEEIMWFKKLYLANFVEPVGLNYSMFIPTLLNQGTTAQQEKWMRPSQELQIIGTYAQTEMGHGTHLRGLETTATYDPKTQEFILNSPTVTSIKWWPGGLGKTSNHAIVLAQLITQGECYGLHAFVVPIREIGTHKPLPGITVGDIGPKFGYEEMDNGYLKMDNYRIPRENMLMKYAQVKPDGTYVKPLSNKLTYGTMVFVRSFLVGNAAQSLSKACTIAIRYSAVRRQSEIKQSEPEPQILDFQTQQYKLFPLLATAYAFHFVGRYMKETYLRINESIGQGDLSELPELHALTAGLKAFTTWTANAGIEECRMACGGHGYSHSSGIPNIYVTFTPACTFEGENTVMMLQTARFLMKIYDQVRSGKLVGGMVSYLNDLPSQRIQPQQVAVWPTMVDINSLEGLTEAYKLRAARLVEIAAKNLQTHVSHRKSKEVAWNLTSVDLVRASEAHCHYVVVKVFSDKLPKIQDKAVQAVLRNLCLLYSLYGISQKGGDFLEGSIITGAQLSQVNARILELLTLIRPNAVALVDAFDFKDMTLGSVLGRYDGNVYENLFEWAKKSPLNKTEVHESYHKHLKPLQSKL.

Ser26 bears the Phosphoserine mark. Lys65 carries the N6-acetyllysine modification. 2 positions are modified to N6-succinyllysine: Lys89 and Lys90. Position 139 (Thr139) interacts with FAD. Lys159 carries the N6-succinyllysine modification. Gly178 provides a ligand contact to FAD. Position 216 is an N6-acetyllysine (Lys216). Lys241 bears the N6-succinyllysine mark. N6-acetyllysine is present on residues Lys255, Lys267, and Lys272. Position 349 is an N6-succinyllysine (Lys349). The active-site Proton acceptor is Glu421. Lys437 and Lys446 each carry N6-acetyllysine; alternate. Residues Lys437 and Lys446 each carry the N6-succinyllysine; alternate modification. At Lys500 the chain carries N6-acetyllysine. Lys512 is subject to N6-acetyllysine; alternate. N6-succinyllysine; alternate is present on Lys512. Lys542 is modified (N6-succinyllysine). Position 637 is an N6-acetyllysine; alternate (Lys637). Lys637 carries the post-translational modification N6-succinyllysine; alternate. Lys643 carries the post-translational modification N6-succinyllysine. The residue at position 649 (Ser649) is a Phosphoserine. Lys652 bears the N6-acetyllysine mark. Position 655 is an N6-succinyllysine (Lys655). Residues 659-661 (SKL) carry the Microbody targeting signal motif.

The protein belongs to the acyl-CoA oxidase family. Homodimer. The enzyme contains three components A, B and C, the latter two being produced from the first by a proteolytic cleavage. Interacts with LONP2. Requires FAD as cofactor. As to expression, expressed in Schwann cells. Expressed (at protein level) in liver.

It is found in the peroxisome. It catalyses the reaction a 2,3-saturated acyl-CoA + O2 = a (2E)-enoyl-CoA + H2O2. The catalysed reaction is hexadecanoyl-CoA + O2 = (2E)-hexadecenoyl-CoA + H2O2. The enzyme catalyses dodecanoyl-CoA + O2 = (2E)-dodecenoyl-CoA + H2O2. It carries out the reaction octanoyl-CoA + O2 = (2E)-octenoyl-CoA + H2O2. It catalyses the reaction decanoyl-CoA + O2 = (2E)-decenoyl-CoA + H2O2. The catalysed reaction is tetradecanoyl-CoA + O2 = (2E)-tetradecenoyl-CoA + H2O2. The enzyme catalyses hexadecanedioyl-CoA + O2 = (2E)-hexadecenedioyl-CoA + H2O2. It carries out the reaction tetracosanoyl-CoA + O2 = (2E)-tetracosenoyl-CoA + H2O2. It catalyses the reaction glutaryl-CoA + O2 = (2E)-glutaconyl-CoA + H2O2. The catalysed reaction is hexanoyl-CoA + O2 = (2E)-hexenoyl-CoA + H2O2. The enzyme catalyses octadecanoyl-CoA + O2 = (2E)-octadecenoyl-CoA + H2O2. It carries out the reaction (5Z,8Z,11Z,14Z,17Z)-eicosapentaenoyl-CoA + O2 = (2E,5Z,8Z,11Z,14Z,17Z)-icosahexaenoyl-CoA + H2O2. It catalyses the reaction (6Z,9Z,12Z,15Z,18Z,21Z)-tetracosahexaenoyl-CoA + O2 = (2E,6Z,9Z,12Z,15Z,18Z,21Z)-tetracosaheptaenoyl-CoA + H2O2. Its pathway is lipid metabolism; peroxisomal fatty acid beta-oxidation. Functionally, involved in the initial and rate-limiting step of peroxisomal beta-oxidation of straight-chain saturated and unsaturated very-long-chain fatty acids. Catalyzes the desaturation of fatty acyl-CoAs such as palmitoyl-CoA (hexadecanoyl-CoA) to 2-trans-enoyl-CoAs ((2E)-enoyl-CoAs) such as (2E)-hexadecenoyl-CoA, and donates electrons directly to molecular oxygen (O(2)), thereby producing hydrogen peroxide (H(2)O(2)). Shows highest activity against medium-chain fatty acyl-CoAs. Shows optimum activity with a chain length of 10 carbons (decanoyl-CoA) in vitro. In terms of biological role, is active against a much broader range of substrates and shows activity towards long-chain acyl-CoAs. The sequence is that of Peroxisomal acyl-coenzyme A oxidase 1 from Rattus norvegicus (Rat).